The following is a 686-amino-acid chain: Epsin (686 aa).

Residues 14–145 (DAVLNTPEIE…QDDQRIKEER (132 aa)) form the ENTH domain. Disordered regions lie at residues 177–417 (YDSD…FNNN) and 463–571 (NSSM…TMRP). Over residues 185–211 (NQRDSYGGNQRDSYGGNQRDSYGGNQR) the composition is skewed to polar residues. Basic and acidic residues predominate over residues 212–225 (ETTRRDSFNGRDEG). Residues 237 to 256 (SYDSDPYSNTRAEYENYSNR) are compositionally biased toward polar residues. Low complexity-rich tracts occupy residues 269-340 (SNNS…SGPS) and 383-417 (NNTN…FNNN). Over residues 491–503 (FDQQSGDFSNKND) the composition is skewed to polar residues. Residues 504-521 (GQQKPKDTNDPWSKKDLF) show a composition bias toward basic and acidic residues. Positions 527 to 547 (GNQNPNQSPVNNTNNNNNGNT) are enriched in low complexity. Residues 558-567 (PITSAGSTIP) show a composition bias toward polar residues.

It belongs to the epsin family.

It localises to the membrane. It is found in the clathrin-coated pit. In terms of biological role, binds to membranes enriched in phosphatidylinositol 4,5-bisphosphate (PtdIns(4,5)P2). This is Epsin (epnA) from Dictyostelium discoideum (Social amoeba).